A 373-amino-acid chain; its full sequence is Glutamine synthetase (373 aa).

The residue at position 2 (Ala2) is an N-acetylalanine. The required for glutamine-induced ubiquitination by CRL4(CRBN) and proteasomal degradation stretch occupies residues 2–25; the sequence is ATSASSHLNKGIKQMYMNLPQGEK. N6-acetyllysine is present on residues Lys11 and Lys14. The 83-residue stretch at 24-106 folds into the GS beta-grasp domain; that stretch reads EKIQLMYIWV…VFCEVFKYNR (83 aa). Tyr104 is modified (phosphotyrosine). Positions 113–373 constitute a GS catalytic domain; it reads LRHSCKRIMD…TGDEPFQYKN (261 aa). Glu134 lines the ATP pocket. Mn(2+) is bound by residues Glu134, Glu136, Glu196, and Glu203. 203–208 serves as a coordination point for ATP; the sequence is EFQIGP. 246-247 lines the L-glutamate pocket; that stretch reads NW. His253 lines the Mn(2+) pocket. ATP is bound by residues 255-257, Arg319, and Arg324; that span reads NFS. Residue Arg319 coordinates L-glutamate. 336-338 contributes to the ADP binding site; the sequence is YFE. Glu338 is a Mn(2+) binding site. Arg340 lines the L-glutamate pocket. Residue Ser343 is modified to Phosphoserine.

This sequence belongs to the glutamine synthetase family. Decamer; composed of two pentamers. Interacts with PALMD. Interacts with RHOJ. Interacts with BEST2; this interaction tethers a fraction of GLUL to the membrane, causing a decrease of cytosolic glutamine synthase (GS) activity and inhibits the chloride channel activity of BEST2 by affecting the gating at the aperture in the absence of intracellular glutamate. Mg(2+) is required as a cofactor. Mn(2+) serves as cofactor. In terms of processing, palmitoylated; undergoes autopalmitoylation. Post-translationally, acetylated by EP300/p300; acetylation is stimulated by increased glutamine levels and promotes ubiquitin-mediated proteasomal degradation. Ubiquitinated by ZNRF1. Ubiquitinated by the DCX (DDB1-CUL4-X-box) E3 ubiquitin-protein ligase complex called CRL4(CRBN), leading to proteasomal degradation. As to expression, in the adult liver, expression is restricted to a small population of hepatocytes which form only a small rim of one to three hepatocytes around the central veins. Expressed in lung microvascular endothelial cells.

The protein resides in the cytoplasm. The protein localises to the cytosol. It localises to the microsome. It is found in the mitochondrion. Its subcellular location is the cell membrane. It catalyses the reaction L-glutamate + NH4(+) + ATP = L-glutamine + ADP + phosphate + H(+). The catalysed reaction is L-cysteinyl-[protein] + hexadecanoyl-CoA = S-hexadecanoyl-L-cysteinyl-[protein] + CoA. Glutamine synthetase activity is inhibited by methionine sulfoximine (MSO). Functionally, glutamine synthetase that catalyzes the ATP-dependent conversion of glutamate and ammonia to glutamine. Its role depends on tissue localization: in the brain, it regulates the levels of toxic ammonia and converts neurotoxic glutamate to harmless glutamine, whereas in the liver, it is one of the enzymes responsible for the removal of ammonia. Plays a key role in ammonium detoxification during erythropoiesis: the glutamine synthetase activity is required to remove ammonium generated by porphobilinogen deaminase (HMBS) during heme biosynthesis to prevent ammonium accumulation and oxidative stress. Essential for proliferation of fetal skin fibroblasts. Independently of its glutamine synthetase activity, required for endothelial cell migration during vascular development. Involved in angiogenesis by regulating membrane localization and activation of the GTPase RHOJ, possibly by promoting RHOJ palmitoylation. May act as a palmitoyltransferase for RHOJ: able to autopalmitoylate and then transfer the palmitoyl group to RHOJ. Plays a role in ribosomal 40S subunit biogenesis. Through the interaction with BEST2, inhibits BEST2 channel activity by affecting the gating at the aperture in the absence of intracellular L-glutamate, but sensitizes BEST2 to intracellular L-glutamate, which promotes the opening of BEST2 and thus relieves its inhibitory effect on BEST2. This Rattus norvegicus (Rat) protein is Glutamine synthetase.